The following is a 169-amino-acid chain: Ribosome maturation factor RimM (169 aa).

A PRC barrel domain is found at 97–169; the sequence is EDEYYWTDLV…TITADWGLDY (73 aa).

The protein belongs to the RimM family. As to quaternary structure, binds ribosomal protein uS19.

It is found in the cytoplasm. Its function is as follows. An accessory protein needed during the final step in the assembly of 30S ribosomal subunit, possibly for assembly of the head region. Essential for efficient processing of 16S rRNA. May be needed both before and after RbfA during the maturation of 16S rRNA. It has affinity for free ribosomal 30S subunits but not for 70S ribosomes. The polypeptide is Ribosome maturation factor RimM (Neisseria meningitidis serogroup B (strain ATCC BAA-335 / MC58)).